The primary structure comprises 180 residues: Ribulose bisphosphate carboxylase small subunit, chloroplastic 2 (180 aa).

Residues 1–56 (MASSVMSSAAVATSTNAAQASMVAPFTGLKSAASFPVSRKQNLDITSIASNGGRVQ) constitute a chloroplast transit peptide.

This sequence belongs to the RuBisCO small chain family. As to quaternary structure, heterohexadecamer of 8 large and 8 small subunits.

The protein resides in the plastid. It is found in the chloroplast. In terms of biological role, ruBisCO catalyzes two reactions: the carboxylation of D-ribulose 1,5-bisphosphate, the primary event in carbon dioxide fixation, as well as the oxidative fragmentation of the pentose substrate. Both reactions occur simultaneously and in competition at the same active site. Although the small subunit is not catalytic it is essential for maximal activity. This Petunia hybrida (Petunia) protein is Ribulose bisphosphate carboxylase small subunit, chloroplastic 2.